The sequence spans 138 residues: Small ribosomal subunit protein uS12m (138 aa).

The N-terminal 29 residues, 1 to 29, are a transit peptide targeting the mitochondrion; the sequence is MSWSGLLHGLNTSLTCGPALVPRLWATCS. The disordered stretch occupies residues 36–56; that stretch reads MHRLGPPKRPPRKLGPTEGRP.

Belongs to the universal ribosomal protein uS12 family. Component of the mitochondrial small ribosomal subunit (mt-SSU). Mature mammalian 55S mitochondrial ribosomes consist of a small (28S) and a large (39S) subunit. The 28S small subunit contains a 12S ribosomal RNA (12S mt-rRNA) and 30 different proteins. The 39S large subunit contains a 16S rRNA (16S mt-rRNA), a copy of mitochondrial valine transfer RNA (mt-tRNA(Val)), which plays an integral structural role, and 52 different proteins.

The protein resides in the mitochondrion. The protein is Small ribosomal subunit protein uS12m (MRPS12) of Homo sapiens (Human).